A 301-amino-acid polypeptide reads, in one-letter code: Acetyl-coenzyme A carboxylase carboxyl transferase subunit beta (301 aa).

Residues 25 to 294 (LWIKCPETGE…SAANDMNSGA (270 aa)) enclose the CoA carboxyltransferase N-terminal domain.

The protein belongs to the AccD/PCCB family. In terms of assembly, acetyl-CoA carboxylase is a heterohexamer composed of biotin carboxyl carrier protein (AccB), biotin carboxylase (AccC) and two subunits each of ACCase subunit alpha (AccA) and ACCase subunit beta (AccD).

Its subcellular location is the cytoplasm. It catalyses the reaction N(6)-carboxybiotinyl-L-lysyl-[protein] + acetyl-CoA = N(6)-biotinyl-L-lysyl-[protein] + malonyl-CoA. It functions in the pathway lipid metabolism; malonyl-CoA biosynthesis; malonyl-CoA from acetyl-CoA: step 1/1. In terms of biological role, component of the acetyl coenzyme A carboxylase (ACC) complex. Biotin carboxylase (BC) catalyzes the carboxylation of biotin on its carrier protein (BCCP) and then the CO(2) group is transferred by the transcarboxylase to acetyl-CoA to form malonyl-CoA. The sequence is that of Acetyl-coenzyme A carboxylase carboxyl transferase subunit beta from Rhizobium leguminosarum bv. trifolii (strain WSM1325).